We begin with the raw amino-acid sequence, 833 residues long: pre-rRNA 2'-O-ribose RNA methyltransferase (833 aa).

Glycine 57, tryptophan 59, aspartate 77, aspartate 93, and aspartate 118 together coordinate S-adenosyl-L-methionine. Catalysis depends on lysine 158, which acts as the Proton acceptor. Disordered stretches follow at residues 323–349, 363–453, 475–640, 730–767, and 779–833; these read KLDN…MEEN, KKKR…DEYL, LDDV…SDED, LGKK…SGTD, and IAKK…KNKK. A coiled-coil region spans residues 336 to 386; that stretch reads EEKKELTAEEMEENLQEEMKEYLALVEKKKRKEKKRQNELKRKHQRKIELT. Basic residues predominate over residues 363–381; that stretch reads KKKRKEKKRQNELKRKHQR. The span at 382–396 shows a compositional bias: basic and acidic residues; it reads KIELTMHIPGDKIEE. Over residues 423-441 the composition is skewed to acidic residues; the sequence is SSDEFDSDDSDDDDDDDNN. The stretch at 455–485 forms a coiled coil; it reads QQLDEQYKLYQQRIRKKAAKLDDVKVKKDKI. Over residues 475 to 486 the composition is skewed to basic and acidic residues; sequence LDDVKVKKDKIG. 2 stretches are compositionally biased toward acidic residues: residues 490–503 and 542–556; these read YNED…EQEE and SESE…DQDD. Positions 557–566 are enriched in basic and acidic residues; that stretch reads ENNKPIDISK. Acidic residues-rich tracts occupy residues 605 to 614 and 626 to 640; these read DKDDQDDDDD and PVQE…SDED. Basic and acidic residues-rich tracts occupy residues 732-741, 751-767, and 794-806; these read KKMEKTRDKA, SNRE…SGTD, and KIVD…DLRA.

The protein belongs to the class I-like SAM-binding methyltransferase superfamily. RNA methyltransferase RlmE family. SPB1 subfamily.

The protein localises to the nucleus. Its subcellular location is the nucleolus. It carries out the reaction a ribonucleotide in rRNA + S-adenosyl-L-methionine = a 2'-O-methylribonucleotide in rRNA + S-adenosyl-L-homocysteine + H(+). RNA 2'-O-methyltransferase involved in the maturation of rRNA and in the biogenesis of ribosomal subunits. In Dictyostelium discoideum (Social amoeba), this protein is pre-rRNA 2'-O-ribose RNA methyltransferase (fsjC).